Reading from the N-terminus, the 196-residue chain is Holliday junction branch migration complex subunit RuvA (196 aa).

Residues 1-63 (MYEYFKGIIS…EDAELLYGFA (63 aa)) are domain I. Residues 64 to 142 (TEEEKQLFLS…AADGLAESKA (79 aa)) form a domain II region. A flexible linker region spans residues 143–146 (PVQT). Residues 147-196 (VDNQELEEAMEAMLALGYKATELKKIKKFFEGTTDTAENYIKSALKMLVK) form a domain III region.

This sequence belongs to the RuvA family. As to quaternary structure, homotetramer. Forms an RuvA(8)-RuvB(12)-Holliday junction (HJ) complex. HJ DNA is sandwiched between 2 RuvA tetramers; dsDNA enters through RuvA and exits via RuvB. An RuvB hexamer assembles on each DNA strand where it exits the tetramer. Each RuvB hexamer is contacted by two RuvA subunits (via domain III) on 2 adjacent RuvB subunits; this complex drives branch migration. In the full resolvosome a probable DNA-RuvA(4)-RuvB(12)-RuvC(2) complex forms which resolves the HJ.

It is found in the cytoplasm. Its function is as follows. The RuvA-RuvB-RuvC complex processes Holliday junction (HJ) DNA during genetic recombination and DNA repair, while the RuvA-RuvB complex plays an important role in the rescue of blocked DNA replication forks via replication fork reversal (RFR). RuvA specifically binds to HJ cruciform DNA, conferring on it an open structure. The RuvB hexamer acts as an ATP-dependent pump, pulling dsDNA into and through the RuvAB complex. HJ branch migration allows RuvC to scan DNA until it finds its consensus sequence, where it cleaves and resolves the cruciform DNA. The protein is Holliday junction branch migration complex subunit RuvA of Streptococcus gordonii (strain Challis / ATCC 35105 / BCRC 15272 / CH1 / DL1 / V288).